Here is a 148-residue protein sequence, read N- to C-terminus: Macrodomain Ter protein (148 aa).

This sequence belongs to the MatP family. Homodimer.

The protein resides in the cytoplasm. In terms of biological role, required for spatial organization of the terminus region of the chromosome (Ter macrodomain) during the cell cycle. Prevents early segregation of duplicated Ter macrodomains during cell division. Binds specifically to matS, which is a 13 bp signature motif repeated within the Ter macrodomain. This Haemophilus influenzae (strain 86-028NP) protein is Macrodomain Ter protein.